We begin with the raw amino-acid sequence, 493 residues long: Transcript termination protein A18 (493 aa).

Positions 100–256 constitute a Helicase ATP-binding domain; that stretch reads MIELKRPLYI…NSIINIAKLS (157 aa). 113–120 contributes to the ATP binding site; the sequence is LACGFGKT. Positions 206 to 209 match the DESH box motif; that stretch reads DESH.

This sequence belongs to the helicase family. Poxviruses subfamily. Interacts with G2. Might be part of a transcription complex composed at least of G2, A18, and H5.

Its subcellular location is the virion. DNA helicase which seems to act as a postreplicative transcription termination factor. Involved in ATP-dependent release of nascent RNA. Forms a stable complex with single-stranded DNA, and to a lesser extent RNA. The protein is Transcript termination protein A18 of Camelus.